The following is a 153-amino-acid chain: Ubiquitin-conjugating enzyme E2 ubc-18 (153 aa).

The UBC core domain maps to 2-149; it reads SATRRLQKEL…AEEHTRKHAE (148 aa). The active-site Glycyl thioester intermediate is the Cys-86.

Belongs to the ubiquitin-conjugating enzyme family. As to quaternary structure, interacts with E3 ubiquitin-protein ligase wwp-1. Interacts with RBR-type E3 ubiquitin transferase ari-1.1. In terms of tissue distribution, expressed in neurons localized in the head and tail of adults.

It catalyses the reaction S-ubiquitinyl-[E1 ubiquitin-activating enzyme]-L-cysteine + [E2 ubiquitin-conjugating enzyme]-L-cysteine = [E1 ubiquitin-activating enzyme]-L-cysteine + S-ubiquitinyl-[E2 ubiquitin-conjugating enzyme]-L-cysteine.. Functionally, ubiquitin-conjugating enzyme E2. Accepts ubiquitin from the E1 complex and catalyzes its covalent attachment to other proteins. Required for diet restriction-mediated lifespan extension, probably acting as part of a complex with ubiquitin-protein ligase wwp-1. Acts redundantly with lin-35/Rb in the regulation of pharyngeal morphogenesis during embryonic development by negatively regulating the expression of proteins such as sup-35. The sequence is that of Ubiquitin-conjugating enzyme E2 ubc-18 from Caenorhabditis elegans.